A 237-amino-acid chain; its full sequence is Maternal B9.10 protein (237 aa).

The protein belongs to the BTG family.

The protein is Maternal B9.10 protein of Xenopus laevis (African clawed frog).